Reading from the N-terminus, the 501-residue chain is Cystine/glutamate transporter (501 aa).

The Cytoplasmic portion of the chain corresponds to 1-43; that stretch reads MVRKPVVSTISKGGYLQGNVNGRLPSLGNKEPPGQEKVQLKRK. A Phosphoserine modification is found at serine 26. Residues 44-64 traverse the membrane as a helical segment; that stretch reads VTLLRGVSIIIGTIIGAGIFI. The Extracellular segment spans residues 65 to 74; sequence SPKGVLQNTG. Residues 75-95 traverse the membrane as a helical segment; that stretch reads SVGMSLTIWTVCGVLSLFGAL. The Cytoplasmic portion of the chain corresponds to 96–101; the sequence is SYAELG. An intramembrane segment occupies 102 to 116; sequence TTIKKSGGHYTYILE. Residues 117–130 are Cytoplasmic-facing; that stretch reads VFGPLPAFVRVWVE. A helical membrane pass occupies residues 131 to 150; it reads LLIIRPAATAVISLAFGRYI. Arginine 135 is a binding site for L-glutamate. Topologically, residues 151-163 are extracellular; that stretch reads LEPFFIQCEIPEL. A helical membrane pass occupies residues 164-179; the sequence is AIKLITAVGITVVMVL. Residues 180 to 193 lie on the Cytoplasmic side of the membrane; it reads NSMSVSWSARIQIF. The helical transmembrane segment at 194-210 threads the bilayer; the sequence is LTFCKLTAILIIIVPGV. The Extracellular portion of the chain corresponds to 211–234; that stretch reads MQLIKGQTQNFKDAFSGRDSSITR. The chain crosses the membrane as a helical span at residues 235 to 255; that stretch reads LPLAFYYGMYAYAGWFYLNFV. Tyrosine 244 serves as a coordination point for L-glutamate. Over 256–265 the chain is Cytoplasmic; the sequence is TEEVENPEKT. A helical membrane pass occupies residues 266 to 286; that stretch reads IPLAICISMAIVTIGYVLTNV. Residues 287-317 lie on the Extracellular side of the membrane; that stretch reads AYFTTINAEELLLSNAVAVTFSERLLGNFSL. N-linked (GlcNAc...) asparagine glycosylation occurs at asparagine 314. The helical transmembrane segment at 318–338 threads the bilayer; sequence AVPIFVALSCFGSMNGGVFAV. Residues 339 to 364 lie on the Cytoplasmic side of the membrane; the sequence is SRLFYVASREGHLPEILSMIHVRKHT. The helical transmembrane segment at 365–385 threads the bilayer; that stretch reads PLPAVIVLHPLTMIMLFSGDL. Residues 386-387 are Extracellular-facing; it reads DS. The helical transmembrane segment at 388–408 threads the bilayer; sequence LLNFLSFARWLFIGLAVAGLI. Residues 409–422 are Cytoplasmic-facing; that stretch reads YLRYKCPDMHRPFK. A helical transmembrane segment spans residues 423 to 443; that stretch reads VPLFIPALFSFTCLFMVALSL. At 444 to 449 the chain is on the extracellular side; the sequence is YSDPFS. The helical transmembrane segment at 450–470 threads the bilayer; that stretch reads TGIGFVITLTGVPAYYLFIIW. Residues 471–501 are Cytoplasmic-facing; that stretch reads DKKPRWFRIMSEKITRTLQIILEVVPEEDKL.

Belongs to the amino acid-polyamine-organocation (APC) superfamily. L-type amino acid transporter (LAT) (TC 2.A.3.8) family. Disulfide-linked heterodimer with the amino acid transport protein SLC3A2/4F2hc; this interaction mediates cell membrane localization. Ubiquitinated by TRIM26; leading to proteasomal degradation. Expressed in term placenta and primary term cytotrophoblast. Expressed mainly in the brain, but also in pancreas.

The protein resides in the cell membrane. It is found in the cell projection. The protein localises to the microvillus membrane. It carries out the reaction L-cystine(out) + L-glutamate(in) = L-cystine(in) + L-glutamate(out). It catalyses the reaction an L-alpha-amino acid(in) + L-kynurenine(out) = an L-alpha-amino acid(out) + L-kynurenine(in). The catalysed reaction is N-acetyl-L-cysteine(out) + L-glutamate(in) = N-acetyl-L-cysteine(in) + L-glutamate(out). Inhibited by erastin and sulfasalazine. Inhibited by (S)-lactate. Inactivated by p-chloromercuribenzoic acid and p-chloromercuribenzenesulfonic acid. Functionally, heterodimer with SLC3A2, that functions as an antiporter by mediating the exchange of extracellular anionic L-cystine and intracellular L-glutamate across the cellular plasma membrane. Provides L-cystine for the maintenance of the redox balance between extracellular L-cystine and L-cysteine and for the maintenance of the intracellular levels of glutathione that is essential for cells protection from oxidative stress. The transport is sodium-independent, electroneutral with a stoichiometry of 1:1, and is drove by the high intracellular concentration of L-glutamate and the intracellular reduction of L-cystine. In addition, mediates the import of L-kynurenine leading to anti-ferroptotic signaling propagation required to maintain L-cystine and glutathione homeostasis. Moreover, mediates N-acetyl-L-cysteine uptake into the placenta leading to subsequently down-regulation of pathways associated with oxidative stress, inflammation and apoptosis. In vitro can also transport L-aspartate. May participate in astrocyte and meningeal cell proliferation during development and can provide neuroprotection by promoting glutathione synthesis and delivery from non-neuronal cells such as astrocytes and meningeal cells to immature neurons. Controls the production of pheomelanin pigment directly. This is Cystine/glutamate transporter from Homo sapiens (Human).